A 272-amino-acid chain; its full sequence is MNTIFKISALTLSAALALSACGKKEAAPASASEPAAASSAQGDTSSIGSTMQQASYAMGVDIGRSLKQMKEQGAEIDLKVFTEAMQAVYDGKEIKMTEEQAQEVMMKFLQEQQAKAVEKHKADAKANKEKGEAFLKENAAKDGVKTTASGLQYKITKQGEGKQPTKDDIVTVEYEGRLIDGTVFDSSKANGGPVTFPLSQVIPGWTEGVQLLKEGGEATFYIPSNLAYREQGAGDKIGPNATLVFDVKLVKIGAPENAPAKQPAQVDIKKVN.

The N-terminal stretch at 1–20 (MNTIFKISALTLSAALALSA) is a signal peptide. The N-palmitoyl cysteine moiety is linked to residue C21. Residue C21 is the site of S-diacylglycerol cysteine attachment. Positions 29 to 40 (ASASEPAAASSA) are enriched in low complexity. The disordered stretch occupies residues 29 to 48 (ASASEPAAASSAQGDTSSIG). In terms of domain architecture, PPIase FKBP-type spans 167–253 (DDIVTVEYEG…VFDVKLVKIG (87 aa)).

Belongs to the FKBP-type PPIase family.

Its subcellular location is the cell membrane. The enzyme catalyses [protein]-peptidylproline (omega=180) = [protein]-peptidylproline (omega=0). This Neisseria meningitidis serogroup B (strain ATCC BAA-335 / MC58) protein is Probable FKBP-type peptidyl-prolyl cis-trans isomerase FkpA (fkpA).